A 169-amino-acid polypeptide reads, in one-letter code: Photosystem I assembly protein Ycf3 (169 aa).

TPR repeat units follow at residues 35-68 (AFSY…EIDP), 72-105 (SYIL…NPAL), and 120-153 (GEQA…APSN).

This sequence belongs to the Ycf3 family.

It localises to the plastid. It is found in the chloroplast thylakoid membrane. Essential for the assembly of the photosystem I (PSI) complex. May act as a chaperone-like factor to guide the assembly of the PSI subunits. The protein is Photosystem I assembly protein Ycf3 of Chaetosphaeridium globosum (Charophycean green alga).